A 339-amino-acid polypeptide reads, in one-letter code: Anthranilate phosphoribosyltransferase (339 aa).

5-phospho-alpha-D-ribose 1-diphosphate-binding positions include glycine 79, 82 to 83 (GD), threonine 87, 89 to 92 (NVST), 107 to 115 (KHGNRAVSS), and serine 119. Glycine 79 lines the anthranilate pocket. Mg(2+) is bound at residue serine 91. Asparagine 110 is an anthranilate binding site. Arginine 165 contacts anthranilate. Mg(2+) contacts are provided by aspartate 224 and glutamate 225.

It belongs to the anthranilate phosphoribosyltransferase family. In terms of assembly, homodimer. Mg(2+) serves as cofactor.

It carries out the reaction N-(5-phospho-beta-D-ribosyl)anthranilate + diphosphate = 5-phospho-alpha-D-ribose 1-diphosphate + anthranilate. Its pathway is amino-acid biosynthesis; L-tryptophan biosynthesis; L-tryptophan from chorismate: step 2/5. Catalyzes the transfer of the phosphoribosyl group of 5-phosphorylribose-1-pyrophosphate (PRPP) to anthranilate to yield N-(5'-phosphoribosyl)-anthranilate (PRA). The protein is Anthranilate phosphoribosyltransferase of Geobacillus kaustophilus (strain HTA426).